The sequence spans 87 residues: Small ribosomal subunit protein uS15 (87 aa).

Belongs to the universal ribosomal protein uS15 family. As to quaternary structure, part of the 30S ribosomal subunit. Forms a bridge to the 50S subunit in the 70S ribosome, contacting the 23S rRNA.

Functionally, one of the primary rRNA binding proteins, it binds directly to 16S rRNA where it helps nucleate assembly of the platform of the 30S subunit by binding and bridging several RNA helices of the 16S rRNA. Its function is as follows. Forms an intersubunit bridge (bridge B4) with the 23S rRNA of the 50S subunit in the ribosome. This chain is Small ribosomal subunit protein uS15, found in Cutibacterium acnes (strain DSM 16379 / KPA171202) (Propionibacterium acnes).